The primary structure comprises 195 residues: Cbp/p300-interacting transactivator 1 (195 aa).

Disordered stretches follow at residues 1-24 and 51-149; these read MPTMSRPALDVKGGTSPVKENANP and ASNG…SPAI. Over residues 54 to 78 the composition is skewed to low complexity; it reads GTKASGAPTSSSGSPSPISSSTATP. Positions 97–106 are enriched in polar residues; that stretch reads MQLQKLNSQY. Residues 137–148 are compositionally biased toward low complexity; it reads SLSPSAGAQSPA. The Nuclear export signal signature appears at 160 to 169; it reads LMSLVVELGL.

Belongs to the CITED family. Interacts (via C-terminus) with CREBBP. Interacts with EGR2. Homodimer. Binds to RBM14. Interacts (via N-terminus) with HSPA8; the interaction suppresses the association of CITED1 with p300/CBP and SMAD-mediated transcription transactivation. Interacts (via C-terminus) with TOX3 (via HGM box); the interaction increases estrogen-response element (ERE)-dependent transcription and protection against cell death. Interacts with ESR1; the interaction occurs in a estrogen-dependent manner. Interacts (unphosphorylated form preferentially and via C-terminus) with EP300. In terms of processing, phosphorylated. Phosphorylation changes in a cell cycle-dependent manner and reduces its transcriptional cofactor activity.

The protein resides in the nucleus. It localises to the cytoplasm. In terms of biological role, transcriptional coactivator of the p300/CBP-mediated transcription complex. Enhances SMAD-mediated transcription by strengthening the functional link between the DNA-binding SMAD transcription factors and the p300/CBP transcription coactivator complex. Stimulates estrogen-dependent transactivation activity mediated by estrogen receptors signaling; stabilizes the interaction of estrogen receptor ESR1 and histone acetyltransferase EP300. Positively regulates TGF-beta signaling through its association with the SMAD/p300/CBP-mediated transcriptional coactivator complex. Induces transcription from estrogen-responsive promoters and protection against cell death. Potentiates EGR2-mediated transcriptional activation activity from the ERBB2 promoter. Acts as an inhibitor of osteoblastic mineralization through a cAMP-dependent parathyroid hormone receptor signaling. May play a role in pigmentation of melanocytes. Associates with chromatin to the estrogen-responsive TGF-alpha promoter region in a estrogen-dependent manner. The chain is Cbp/p300-interacting transactivator 1 (CITED1) from Bos taurus (Bovine).